Consider the following 425-residue polypeptide: Serine hydroxymethyltransferase (425 aa).

(6S)-5,6,7,8-tetrahydrofolate contacts are provided by residues L120 and 124 to 126 (GHL). The residue at position 229 (K229) is an N6-(pyridoxal phosphate)lysine. 353–355 (SPF) provides a ligand contact to (6S)-5,6,7,8-tetrahydrofolate.

Belongs to the SHMT family. Homodimer. The cofactor is pyridoxal 5'-phosphate.

It localises to the cytoplasm. It catalyses the reaction (6R)-5,10-methylene-5,6,7,8-tetrahydrofolate + glycine + H2O = (6S)-5,6,7,8-tetrahydrofolate + L-serine. It participates in one-carbon metabolism; tetrahydrofolate interconversion. It functions in the pathway amino-acid biosynthesis; glycine biosynthesis; glycine from L-serine: step 1/1. Its function is as follows. Catalyzes the reversible interconversion of serine and glycine with tetrahydrofolate (THF) serving as the one-carbon carrier. This reaction serves as the major source of one-carbon groups required for the biosynthesis of purines, thymidylate, methionine, and other important biomolecules. Also exhibits THF-independent aldolase activity toward beta-hydroxyamino acids, producing glycine and aldehydes, via a retro-aldol mechanism. This chain is Serine hydroxymethyltransferase, found in Thermosynechococcus vestitus (strain NIES-2133 / IAM M-273 / BP-1).